The following is a 247-amino-acid chain: Adenosylcobinamide-GDP ribazoletransferase (247 aa).

4 helical membrane passes run 34–54, 59–79, 113–133, and 194–214; these read IITFPLIGLLLGAISGLVFMV, CGVPLAALFSVLVLALMTGGF, GGLALIFVVLAKILVLSELAL, and VLLPGMHGVAAMVVTMVAIFI.

This sequence belongs to the CobS family. Mg(2+) is required as a cofactor.

Its subcellular location is the cell inner membrane. It carries out the reaction alpha-ribazole + adenosylcob(III)inamide-GDP = adenosylcob(III)alamin + GMP + H(+). The enzyme catalyses alpha-ribazole 5'-phosphate + adenosylcob(III)inamide-GDP = adenosylcob(III)alamin 5'-phosphate + GMP + H(+). It functions in the pathway cofactor biosynthesis; adenosylcobalamin biosynthesis; adenosylcobalamin from cob(II)yrinate a,c-diamide: step 7/7. Joins adenosylcobinamide-GDP and alpha-ribazole to generate adenosylcobalamin (Ado-cobalamin). Also synthesizes adenosylcobalamin 5'-phosphate from adenosylcobinamide-GDP and alpha-ribazole 5'-phosphate. The sequence is that of Adenosylcobinamide-GDP ribazoletransferase from Escherichia coli (strain ATCC 8739 / DSM 1576 / NBRC 3972 / NCIMB 8545 / WDCM 00012 / Crooks).